The chain runs to 483 residues: Aspartyl/glutamyl-tRNA(Asn/Gln) amidotransferase subunit B (483 aa).

It belongs to the GatB/GatE family. GatB subfamily. As to quaternary structure, heterotrimer of A, B and C subunits.

The catalysed reaction is L-glutamyl-tRNA(Gln) + L-glutamine + ATP + H2O = L-glutaminyl-tRNA(Gln) + L-glutamate + ADP + phosphate + H(+). The enzyme catalyses L-aspartyl-tRNA(Asn) + L-glutamine + ATP + H2O = L-asparaginyl-tRNA(Asn) + L-glutamate + ADP + phosphate + 2 H(+). Allows the formation of correctly charged Asn-tRNA(Asn) or Gln-tRNA(Gln) through the transamidation of misacylated Asp-tRNA(Asn) or Glu-tRNA(Gln) in organisms which lack either or both of asparaginyl-tRNA or glutaminyl-tRNA synthetases. The reaction takes place in the presence of glutamine and ATP through an activated phospho-Asp-tRNA(Asn) or phospho-Glu-tRNA(Gln). The sequence is that of Aspartyl/glutamyl-tRNA(Asn/Gln) amidotransferase subunit B from Thermomicrobium roseum (strain ATCC 27502 / DSM 5159 / P-2).